The following is a 120-amino-acid chain: MAISSFKHEHPLEKRQAEAARIREKYPDRIPVIVERAEKSDVPDIDRKKYLVPADLTVGQFVYVVRKRIKLSPEKAIFIFVKNILPPTAAIMSAIYEEHKDEDGFLYMSYSGENTFGIFF.

Residue Gly117 is the site of Phosphatidylethanolamine amidated glycine attachment. The propeptide at 118-120 (IFF) is removed in mature form.

It belongs to the ATG8 family. Interacts with ATG4B. Interacts with NBR1. The C-terminal 3 residues are removed by ATG4 to expose Gly-117 at the C-terminus. This Gly-117 forms then a thioester bond with the 'Cys-558' of ATG7 (E1-like activating enzyme) before being transferred to the 'Cys-258' of ATG3 (the specific E2 conjugating enzyme), in order to be finally amidated with phosphatidylethanolamine. This lipid modification anchors ATG8 to autophagosomes. As to expression, constitutively expressed.

The protein localises to the cytoplasmic vesicle. It is found in the autophagosome membrane. The protein resides in the vacuole membrane. Its subcellular location is the cytoplasm. It localises to the cytoskeleton. Functionally, ubiquitin-like modifier involved in autophagosomes formation. May mediate the delivery of the autophagosomes to the vacuole via the microtubule cytoskeleton. In Arabidopsis thaliana (Mouse-ear cress), this protein is Autophagy-related protein 8d (ATG8D).